The following is a 397-amino-acid chain: S-adenosylmethionine synthase (397 aa).

Histidine 15 contributes to the ATP binding site. Position 17 (aspartate 17) interacts with Mg(2+). Glutamate 43 is a binding site for K(+). L-methionine is bound by residues glutamate 56 and glutamine 99. The tract at residues 99-109 is flexible loop; it reads QSPDIAMGVNK. Residues 175 to 177, 241 to 242, aspartate 250, 256 to 257, alanine 273, and lysine 277 contribute to the ATP site; these read DGK, RF, and RK. Aspartate 250 contributes to the L-methionine binding site. Lysine 281 serves as a coordination point for L-methionine.

This sequence belongs to the AdoMet synthase family. Homotetramer; dimer of dimers. Requires Mg(2+) as cofactor. K(+) is required as a cofactor.

It localises to the cytoplasm. It catalyses the reaction L-methionine + ATP + H2O = S-adenosyl-L-methionine + phosphate + diphosphate. It participates in amino-acid biosynthesis; S-adenosyl-L-methionine biosynthesis; S-adenosyl-L-methionine from L-methionine: step 1/1. Functionally, catalyzes the formation of S-adenosylmethionine (AdoMet) from methionine and ATP. The overall synthetic reaction is composed of two sequential steps, AdoMet formation and the subsequent tripolyphosphate hydrolysis which occurs prior to release of AdoMet from the enzyme. This chain is S-adenosylmethionine synthase, found in Acetivibrio thermocellus (strain ATCC 27405 / DSM 1237 / JCM 9322 / NBRC 103400 / NCIMB 10682 / NRRL B-4536 / VPI 7372) (Clostridium thermocellum).